The sequence spans 129 residues: MSNIPADLKYASTHEWVRDEGDGTFTVGISEHAQELLGDMVFVELPDVGDKVATGDDIAVAESVKAASDIYAPMTGEVVAINEDLEDAPETVNNDPYGDGWLFRIKADDSSELDNLLDANTYEASIDED.

The region spanning 24–106 (TFTVGISEHA…YGDGWLFRIK (83 aa)) is the Lipoyl-binding domain. K65 is modified (N6-lipoyllysine).

Belongs to the GcvH family. The glycine cleavage system is composed of four proteins: P, T, L and H. It depends on (R)-lipoate as a cofactor.

The glycine cleavage system catalyzes the degradation of glycine. The H protein shuttles the methylamine group of glycine from the P protein to the T protein. This chain is Glycine cleavage system H protein, found in Idiomarina loihiensis (strain ATCC BAA-735 / DSM 15497 / L2-TR).